The primary structure comprises 472 residues: Carboxypeptidase E (472 aa).

The N-terminal stretch at 1-21 (MLHAMRPVLLVAALLAVTAHA) is a signal peptide. One can recognise a Peptidase M14 domain in the interval 39–359 (HYHNQAQLEA…KSIFEYVWKS (321 aa)). The Zn(2+) site is built by His-101 and Glu-104. Residue Asn-134 is glycosylated (N-linked (GlcNAc...) asparagine). His-232 contacts Zn(2+). Glu-329 acts as the Proton donor/acceptor in catalysis. Asn-385 and Asn-428 each carry an N-linked (GlcNAc...) asparagine glycan.

Belongs to the peptidase M14 family. Requires Zn(2+) as cofactor. In terms of tissue distribution, expression is restricted to the nervous system.

The protein resides in the cell projection. It localises to the axon. The protein localises to the perikaryon. It is found in the cytoplasmic vesicle. Its subcellular location is the secretory vesicle lumen. The catalysed reaction is Release of C-terminal arginine or lysine residues from polypeptides.. In terms of biological role, during FMRFamide-like peptide (FaRPs or FLP) and neuropeptide-like protein (NLP) precursor processing, catalyzes the removal of Arg or Lys residues from the C-terminus following the initial endoprotease cleavage. By processing neuropeptides, modulates basal acetylcholine release at the ventral cord neuromuscular junctions. Involved in egg-laying, defecation and locomotion. By processing FLP neuropeptides, regulates the turning step of male mating behavior. Involved in reducing pharyngeal pumping in response to high CO(2) levels. This chain is Carboxypeptidase E, found in Caenorhabditis elegans.